The following is a 145-amino-acid chain: 3-hydroxyacyl-[acyl-carrier-protein] dehydratase FabZ (145 aa).

The active site involves His-48.

This sequence belongs to the thioester dehydratase family. FabZ subfamily.

Its subcellular location is the cytoplasm. It catalyses the reaction a (3R)-hydroxyacyl-[ACP] = a (2E)-enoyl-[ACP] + H2O. Functionally, involved in unsaturated fatty acids biosynthesis. Catalyzes the dehydration of short chain beta-hydroxyacyl-ACPs and long chain saturated and unsaturated beta-hydroxyacyl-ACPs. The polypeptide is 3-hydroxyacyl-[acyl-carrier-protein] dehydratase FabZ (Saccharophagus degradans (strain 2-40 / ATCC 43961 / DSM 17024)).